The primary structure comprises 297 residues: Ribosomal RNA small subunit methyltransferase A (297 aa).

Positions 31, 33, 58, 79, 104, and 129 each coordinate S-adenosyl-L-methionine.

The protein belongs to the class I-like SAM-binding methyltransferase superfamily. rRNA adenine N(6)-methyltransferase family. RsmA subfamily.

Its subcellular location is the cytoplasm. The enzyme catalyses adenosine(1518)/adenosine(1519) in 16S rRNA + 4 S-adenosyl-L-methionine = N(6)-dimethyladenosine(1518)/N(6)-dimethyladenosine(1519) in 16S rRNA + 4 S-adenosyl-L-homocysteine + 4 H(+). Functionally, specifically dimethylates two adjacent adenosines (A1518 and A1519) in the loop of a conserved hairpin near the 3'-end of 16S rRNA in the 30S particle. May play a critical role in biogenesis of 30S subunits. The protein is Ribosomal RNA small subunit methyltransferase A of Staphylococcus aureus (strain Mu3 / ATCC 700698).